The following is a 174-amino-acid chain: Putative serine protease 46 (174 aa).

The 132-residue stretch at 43–174 (VVKGKLVEVG…IGWGTTGKKG (132 aa)) folds into the Peptidase S1 domain. C68 and C84 are joined by a disulfide. Residues H83 and D128 each act as charge relay system in the active site.

Belongs to the peptidase S1 family.

This Homo sapiens (Human) protein is Putative serine protease 46.